The chain runs to 164 residues: Transcription elongation factor GreA (164 aa).

The protein belongs to the GreA/GreB family.

Functionally, necessary for efficient RNA polymerase transcription elongation past template-encoded arresting sites. The arresting sites in DNA have the property of trapping a certain fraction of elongating RNA polymerases that pass through, resulting in locked ternary complexes. Cleavage of the nascent transcript by cleavage factors such as GreA or GreB allows the resumption of elongation from the new 3'terminus. GreA releases sequences of 2 to 3 nucleotides. In Helicobacter pylori (strain J99 / ATCC 700824) (Campylobacter pylori J99), this protein is Transcription elongation factor GreA.